A 430-amino-acid chain; its full sequence is Trigger factor (430 aa).

Positions 157–242 (GDLVALETWS…AVEVSEPVLP (86 aa)) constitute a PPIase FKBP-type domain.

The protein belongs to the FKBP-type PPIase family. Tig subfamily.

It localises to the cytoplasm. It carries out the reaction [protein]-peptidylproline (omega=180) = [protein]-peptidylproline (omega=0). In terms of biological role, involved in protein export. Acts as a chaperone by maintaining the newly synthesized protein in an open conformation. Functions as a peptidyl-prolyl cis-trans isomerase. The polypeptide is Trigger factor (Xanthomonas campestris pv. campestris (strain ATCC 33913 / DSM 3586 / NCPPB 528 / LMG 568 / P 25)).